An 822-amino-acid polypeptide reads, in one-letter code: ATP-dependent zinc metalloprotease FTSH 8, mitochondrial (822 aa).

Positions 1–25 (MSLASLARALSRRSAPSSSRARQGF) are enriched in low complexity. Disordered regions lie at residues 1 to 50 (MSLA…LHGG), 103 to 131 (NYYP…STDD), and 202 to 221 (SSPQ…TTND). The transit peptide at 1-93 (MSLASLARAL…LANPQFRRLF (93 aa)) directs the protein to the mitochondrion. Positions 108–127 (GKKEAPKGDGSNKSDSKQDS) are enriched in basic and acidic residues. ATP is bound at residue 375–382 (GPPGTGKT). Histidine 600 is a Zn(2+) binding site. Residue glutamate 601 is part of the active site. 2 residues coordinate Zn(2+): histidine 604 and aspartate 676. The disordered stretch occupies residues 781–822 (PTNYDLFKQGFQDEEDSKNQEAAKTPQPDDDGTPSLGEVVPT).

In the N-terminal section; belongs to the AAA ATPase family. This sequence in the C-terminal section; belongs to the peptidase M41 family. It depends on Zn(2+) as a cofactor.

It localises to the mitochondrion. Functionally, probable ATP-dependent zinc metallopeptidase. The chain is ATP-dependent zinc metalloprotease FTSH 8, mitochondrial (FTSH8) from Oryza sativa subsp. japonica (Rice).